Consider the following 289-residue polypeptide: ATP synthase gamma chain (289 aa).

It belongs to the ATPase gamma chain family. As to quaternary structure, F-type ATPases have 2 components, CF(1) - the catalytic core - and CF(0) - the membrane proton channel. CF(1) has five subunits: alpha(3), beta(3), gamma(1), delta(1), epsilon(1). CF(0) has three main subunits: a, b and c.

The protein localises to the cell inner membrane. Functionally, produces ATP from ADP in the presence of a proton gradient across the membrane. The gamma chain is believed to be important in regulating ATPase activity and the flow of protons through the CF(0) complex. In Polynucleobacter necessarius subsp. necessarius (strain STIR1), this protein is ATP synthase gamma chain.